A 79-amino-acid polypeptide reads, in one-letter code: Small ribosomal subunit protein uS17 (79 aa).

It belongs to the universal ribosomal protein uS17 family. In terms of assembly, part of the 30S ribosomal subunit.

One of the primary rRNA binding proteins, it binds specifically to the 5'-end of 16S ribosomal RNA. In Orientia tsutsugamushi (strain Boryong) (Rickettsia tsutsugamushi), this protein is Small ribosomal subunit protein uS17.